The primary structure comprises 82 residues: MADTSSSQARRPFHRRRKTCPFSGANAPKIDYKDVRLLQRYISERGKIVPSRITAVSQKKQRELAQAIKRARFLGLLPYVVA.

The tract at residues 1–25 (MADTSSSQARRPFHRRRKTCPFSGA) is disordered.

Belongs to the bacterial ribosomal protein bS18 family. Part of the 30S ribosomal subunit. Forms a tight heterodimer with protein bS6.

Functionally, binds as a heterodimer with protein bS6 to the central domain of the 16S rRNA, where it helps stabilize the platform of the 30S subunit. The polypeptide is Small ribosomal subunit protein bS18 (Agrobacterium fabrum (strain C58 / ATCC 33970) (Agrobacterium tumefaciens (strain C58))).